A 540-amino-acid polypeptide reads, in one-letter code: Cytokinin dehydrogenase 5 (540 aa).

Residues 1–22 (MNREMTSSFLLLTFAICKLIIA) form the signal peptide. Residues 63–241 (SPEEPLAVLH…TRARISLEPA (179 aa)) enclose the FAD-binding PCMH-type domain. Residues A97, G99, and G101 each coordinate FAD. At H102 the chain carries Pros-8alpha-FAD histidine. S103, Q107, D165, T170, S176, I180, and I231 together coordinate FAD. N310 and N406 each carry an N-linked (GlcNAc...) asparagine glycan. FAD is bound by residues Y479 and Q517.

This sequence belongs to the oxygen-dependent FAD-linked oxidoreductase family. FAD is required as a cofactor. Expressed in the developing leaf petioles and in the rib zone of the axillary shoot meristems. In roots, expressed in the vascular cylinder within the root apical meristem and only faintly detectable in the differentiated root.

It is found in the secreted. The protein resides in the extracellular space. The enzyme catalyses N(6)-dimethylallyladenine + A + H2O = 3-methyl-2-butenal + adenine + AH2. Its function is as follows. Catalyzes the oxidation of cytokinins, a family of N(6)-substituted adenine derivatives that are plant hormones, where the substituent is an isopentenyl group. In association with CKX3 regulates the activity of the reproductive meristems, flower organ size and ovule formation. This chain is Cytokinin dehydrogenase 5 (CKX5), found in Arabidopsis thaliana (Mouse-ear cress).